Reading from the N-terminus, the 148-residue chain is Snaclec convulxin subunit beta (148 aa).

An N-terminal signal peptide occupies residues 1–23; the sequence is MGRFIFVSFGLLVVFLSLSGSEA. Disulfide bonds link Cys27-Cys38, Cys55-Cys144, and Cys121-Cys136. Residues 34–148 enclose the C-type lectin domain; the sequence is YDRYCYKVFK…TYSFVCKFEA (115 aa).

The protein belongs to the snaclec family. In terms of assembly, tetramer of heterodimers of alpha and beta subunits (alphabeta)(4); disulfide-linked. Expressed by the venom gland.

It localises to the secreted. Functionally, snake venom lectin that activates platelets by binding to the platelet collagen receptor glycoprotein VI (GP6). The indirect activation of integrin alpha-IIb/beta-3 (ITGA2B/ITGB3) also induced by the toxin is upstream the cytoskeletal translocation of GPIb, FcRgamma (FCER1G) and 14-3-3zeta (YWHAZ). This chain is Snaclec convulxin subunit beta, found in Crotalus durissus terrificus (South American rattlesnake).